We begin with the raw amino-acid sequence, 545 residues long: CTP synthase (545 aa).

The tract at residues 1-266 (MTTRYIFVTG…DDLVTKRFGL (266 aa)) is amidoligase domain. Residue S14 coordinates CTP. S14 is a binding site for UTP. ATP-binding positions include 15-20 (SLGKGI) and D72. D72 and E140 together coordinate Mg(2+). CTP-binding positions include 147–149 (DIE), 187–192 (KTKPTQ), and K223. Residues 187-192 (KTKPTQ) and K223 each bind UTP. 239 to 241 (KDV) contacts ATP. Residues 291–542 (TIGMVGKYTE…VAAAVAYQKR (252 aa)) form the Glutamine amidotransferase type-1 domain. G352 lines the L-glutamine pocket. The active-site Nucleophile; for glutamine hydrolysis is the C379. L-glutamine-binding positions include 380 to 383 (LGMQ), E403, and R470. Catalysis depends on residues H515 and E517.

Belongs to the CTP synthase family. As to quaternary structure, homotetramer.

The catalysed reaction is UTP + L-glutamine + ATP + H2O = CTP + L-glutamate + ADP + phosphate + 2 H(+). It catalyses the reaction L-glutamine + H2O = L-glutamate + NH4(+). It carries out the reaction UTP + NH4(+) + ATP = CTP + ADP + phosphate + 2 H(+). The protein operates within pyrimidine metabolism; CTP biosynthesis via de novo pathway; CTP from UDP: step 2/2. Its activity is regulated as follows. Allosterically activated by GTP, when glutamine is the substrate; GTP has no effect on the reaction when ammonia is the substrate. The allosteric effector GTP functions by stabilizing the protein conformation that binds the tetrahedral intermediate(s) formed during glutamine hydrolysis. Inhibited by the product CTP, via allosteric rather than competitive inhibition. In terms of biological role, catalyzes the ATP-dependent amination of UTP to CTP with either L-glutamine or ammonia as the source of nitrogen. Regulates intracellular CTP levels through interactions with the four ribonucleotide triphosphates. The protein is CTP synthase of Shewanella loihica (strain ATCC BAA-1088 / PV-4).